We begin with the raw amino-acid sequence, 257 residues long: Neurotrophin-3 (257 aa).

The N-terminal stretch at 1–18 (MSILFYVIFLAYLRGIQS) is a signal peptide. Positions 19–138 (TNMDQRSLPE…VLNRTSRRKR (120 aa)) are excised as a propeptide. An N-linked (GlcNAc...) asparagine glycan is attached at asparagine 131. Cystine bridges form between cysteine 152–cysteine 217, cysteine 195–cysteine 246, and cysteine 205–cysteine 248.

This sequence belongs to the NGF-beta family. As to expression, in the embryo, the expression peak at E4.5 and decreases at later stages of development.

It localises to the secreted. In terms of biological role, seems to promote the survival of visceral and proprioceptive sensory neurons. In Gallus gallus (Chicken), this protein is Neurotrophin-3 (NTF3).